Consider the following 185-residue polypeptide: Acireductone dioxygenase (185 aa).

The segment at 1–23 (MSRLSIHPEGNTNATSPAEPLLE) is disordered. Residues His-102, His-104, Glu-108, and His-146 each coordinate Fe(2+). The Ni(2+) site is built by His-102, His-104, Glu-108, and His-146.

Belongs to the acireductone dioxygenase (ARD) family. As to quaternary structure, monomer. Requires Fe(2+) as cofactor. It depends on Ni(2+) as a cofactor.

The catalysed reaction is 1,2-dihydroxy-5-(methylsulfanyl)pent-1-en-3-one + O2 = 3-(methylsulfanyl)propanoate + CO + formate + 2 H(+). It carries out the reaction 1,2-dihydroxy-5-(methylsulfanyl)pent-1-en-3-one + O2 = 4-methylsulfanyl-2-oxobutanoate + formate + 2 H(+). It participates in amino-acid biosynthesis; L-methionine biosynthesis via salvage pathway; L-methionine from S-methyl-5-thio-alpha-D-ribose 1-phosphate: step 5/6. Catalyzes 2 different reactions between oxygen and the acireductone 1,2-dihydroxy-3-keto-5-methylthiopentene (DHK-MTPene) depending upon the metal bound in the active site. Fe-containing acireductone dioxygenase (Fe-ARD) produces formate and 2-keto-4-methylthiobutyrate (KMTB), the alpha-ketoacid precursor of methionine in the methionine recycle pathway. Ni-containing acireductone dioxygenase (Ni-ARD) produces methylthiopropionate, carbon monoxide and formate, and does not lie on the methionine recycle pathway. This Prochlorococcus marinus (strain MIT 9303) protein is Acireductone dioxygenase.